The sequence spans 166 residues: Nucleotide-binding protein Dred_1927 (166 aa).

The protein belongs to the YajQ family.

Nucleotide-binding protein. In Desulforamulus reducens (strain ATCC BAA-1160 / DSM 100696 / MI-1) (Desulfotomaculum reducens), this protein is Nucleotide-binding protein Dred_1927.